Reading from the N-terminus, the 494-residue chain is BTB/POZ domain and ankyrin repeat-containing protein NH5.2 (494 aa).

The region spanning 25–131 (SDVAFSVEGR…LYSGQASVAA (107 aa)) is the BTB domain. The interval 60-95 (NHQPPPPPPPPLNWPTAGGGGGGSGGGGRGGAGGGG) is disordered. A compositionally biased stretch (pro residues) spans 61-72 (HQPPPPPPPPLN). Gly residues predominate over residues 76-95 (AGGGGGGSGGGGRGGAGGGG). The C2HC NPR-type zinc finger occupies 137–151 (LPGCGARGCWHTRCG). Zn(2+) is bound by residues Cys-140, Cys-145, His-147, and Cys-150. ANK repeat units lie at residues 275–303 (NKIRRMRRALDAADIELVKLMVMGEGLDL), 304–334 (DDALAVHYAVQHCNRDVVKALLELGAADVNS), 339–368 (TGKTALHLAAEMVSPDMVSVLLDHHADPNS), and 372–406 (DGVTPLDVLRSLTSEFLFKGAVPGLTHIEPNKLRL). 2 disordered regions span residues 421 to 443 (DDGAPVTGGEAGGSDGGNFPRSD) and 471 to 494 (GEGRKSNNGRGSPPPAMYFPNGFA).

The protein belongs to the plant 'ANKYRIN-BTB/POZ' family. 'NOOT-BOP-COCH-like' (NBCL) subfamily. As to quaternary structure, homodimer. Interacts with TGAL5, TGAL7, TGAL8 and TGAL9.

The protein resides in the nucleus. It is found in the cytoplasm. Its pathway is protein modification; protein ubiquitination. Its function is as follows. May act as a substrate-specific adapter of an E3 ubiquitin-protein ligase complex (CUL3-RBX1-BTB) which mediates the ubiquitination and subsequent proteasomal degradation of target proteins. Transcriptional co-regulator involved in the promotion of leaf and floral meristem fate and determinacy. Required for the abscission of senescent organs, probably by regulating the cell wall disorganization in abscission zones (AZs, e.g. pulvini at the base of leaves). The sequence is that of BTB/POZ domain and ankyrin repeat-containing protein NH5.2 from Oryza sativa subsp. japonica (Rice).